The following is a 478-amino-acid chain: Adenosylhomocysteinase (478 aa).

Substrate contacts are provided by Thr-57, Asp-139, and Glu-201. Thr-202–Thr-204 contributes to the NAD(+) binding site. Residues Lys-231 and Asp-235 each contribute to the substrate site. Residues Asn-236, Gly-265–Gly-270, Glu-288, Asn-323, Ile-344–His-346, and Asn-392 contribute to the NAD(+) site.

The protein belongs to the adenosylhomocysteinase family. Requires NAD(+) as cofactor.

The protein resides in the cytoplasm. It catalyses the reaction S-adenosyl-L-homocysteine + H2O = L-homocysteine + adenosine. The protein operates within amino-acid biosynthesis; L-homocysteine biosynthesis; L-homocysteine from S-adenosyl-L-homocysteine: step 1/1. In terms of biological role, may play a key role in the regulation of the intracellular concentration of adenosylhomocysteine. The sequence is that of Adenosylhomocysteinase from Corynebacterium glutamicum (strain R).